Consider the following 1196-residue polypeptide: Nucleolar protein 6 (1196 aa).

2 disordered regions span residues 1 to 75 (MPGK…VKPP) and 1140 to 1196 (KREQ…KALK). Residues 22–31 (HAEDHSDLEH) show a composition bias toward basic and acidic residues. Residues 1165-1174 (KPKKHRKRKG) are compositionally biased toward basic residues.

Belongs to the NRAP family. As to quaternary structure, part of the small subunit (SSU) processome, composed of more than 70 proteins and the RNA chaperone small nucleolar RNA (snoRNA) U3.

The protein localises to the nucleus. It localises to the nucleolus. It is found in the chromosome. Functionally, part of the small subunit (SSU) processome, first precursor of the small eukaryotic ribosomal subunit. During the assembly of the SSU processome in the nucleolus, many ribosome biogenesis factors, an RNA chaperone and ribosomal proteins associate with the nascent pre-rRNA and work in concert to generate RNA folding, modifications, rearrangements and cleavage as well as targeted degradation of pre-ribosomal RNA by the RNA exosome. The chain is Nucleolar protein 6 from Drosophila sechellia (Fruit fly).